The primary structure comprises 264 residues: Glutamate racemase (264 aa).

Substrate is bound by residues 10 to 11 (DS) and 42 to 43 (YG). The Proton donor/acceptor role is filled by Cys73. 74–75 (NT) contacts substrate. Catalysis depends on Cys183, which acts as the Proton donor/acceptor. 184-185 (TH) is a substrate binding site.

It belongs to the aspartate/glutamate racemases family.

It catalyses the reaction L-glutamate = D-glutamate. It participates in cell wall biogenesis; peptidoglycan biosynthesis. Functionally, provides the (R)-glutamate required for cell wall biosynthesis. In Streptococcus gordonii (strain Challis / ATCC 35105 / BCRC 15272 / CH1 / DL1 / V288), this protein is Glutamate racemase.